We begin with the raw amino-acid sequence, 117 residues long: Glutamine-rich protein (117 aa).

Over residues 27–72 the composition is skewed to low complexity; sequence RQQFQQQQQQQRQPQLQQQQQQQGIQQQPQGLQHQQQQFGLTQQHG. Residues 27 to 88 are disordered; that stretch reads RQQFQQQQQQ…IVQPNPASQN (62 aa). The segment covering 75 to 87 has biased composition (polar residues); it reads RRQNIVQPNPASQ.

Component of the acid-soluble and acid-insoluble organic matrix of calcified shell layers (at protein level).

Its subcellular location is the secreted. The polypeptide is Glutamine-rich protein (Haliotis asinina (Donkey's ear abalone)).